We begin with the raw amino-acid sequence, 367 residues long: Anhydro-N-acetylmuramic acid kinase (367 aa).

13–20 (GTSMDGAD) contacts ATP.

It belongs to the anhydro-N-acetylmuramic acid kinase family.

The catalysed reaction is 1,6-anhydro-N-acetyl-beta-muramate + ATP + H2O = N-acetyl-D-muramate 6-phosphate + ADP + H(+). It participates in amino-sugar metabolism; 1,6-anhydro-N-acetylmuramate degradation. Its pathway is cell wall biogenesis; peptidoglycan recycling. In terms of biological role, catalyzes the specific phosphorylation of 1,6-anhydro-N-acetylmuramic acid (anhMurNAc) with the simultaneous cleavage of the 1,6-anhydro ring, generating MurNAc-6-P. Is required for the utilization of anhMurNAc either imported from the medium or derived from its own cell wall murein, and thus plays a role in cell wall recycling. This is Anhydro-N-acetylmuramic acid kinase from Neisseria meningitidis serogroup A / serotype 4A (strain DSM 15465 / Z2491).